A 362-amino-acid chain; its full sequence is C-C chemokine receptor type 10 (362 aa).

The Extracellular portion of the chain corresponds to 1–52 (MGTEATEQVSWGHYSGDEEDAYSAEPLPELCYKADVQAFSRAFQPSVSLTVA). Residues 53 to 68 (ALGLAGNGLVLATHLA) traverse the membrane as a helical segment. Residues 69–78 (ARRAARSPTS) lie on the Cytoplasmic side of the membrane. A helical membrane pass occupies residues 79–99 (AHLLQLALADLLLALTLPFAA). Residues 100–114 (AGALQGWSLGSATCR) lie on the Extracellular side of the membrane. A disulfide bridge connects residues Cys-113 and Cys-191. A helical membrane pass occupies residues 115-136 (TISGLYSASFHAGFLFLACISA). The Cytoplasmic portion of the chain corresponds to 137–159 (DRYVAIARALPAGPRPSTPGRAH). Residues 160-179 (LVSVIVWLLSLLLALPALLF) traverse the membrane as a helical segment. Residues 180–203 (SQDGQREGQRRCRLIFPEGLTQTV) lie on the Extracellular side of the membrane. Residues 204–225 (KGASAVAQVALGFALPLGVMVA) form a helical membrane-spanning segment. Topologically, residues 226–247 (CYALLGRTLLAARGPERRRALR) are cytoplasmic. A helical transmembrane segment spans residues 248 to 269 (VVVALVAAFVVLQLPYSLALLL). Residues 270-290 (DTADLLAARERSCPASKRKDV) lie on the Extracellular side of the membrane. The helical transmembrane segment at 291 to 313 (ALLVTSGLALARCGLNPVLYAFL) threads the bilayer. The Cytoplasmic segment spans residues 314–362 (GLRFRQDLRRLLRGGSCPSGPQPRRGCPRRPRLSSCSAPTETHSLSWDN). Low complexity predominate over residues 328–338 (GSCPSGPQPRR). A disordered region spans residues 328–362 (GSCPSGPQPRRGCPRRPRLSSCSAPTETHSLSWDN). Residues 351–362 (APTETHSLSWDN) are compositionally biased toward polar residues.

The protein belongs to the G-protein coupled receptor 1 family. As to expression, expressed at high levels in adult testis, small intestine, fetal lung, fetal kidney. Weaker expression was observed in many other adult tissues including spleen, thymus, lymph node, Peyer patches, colon, heart, ovary, peripheral blood lymphocytes, thyroid and spinal cord. Also expressed by melanocytes, dermal fibroblasts, dermal microvascular endothelial cells. Also detected in T-cells and in skin-derived Langerhans cells.

It localises to the cell membrane. Functionally, receptor for chemokines SCYA27 and SCYA28. Subsequently transduces a signal by increasing the intracellular calcium ions level and stimulates chemotaxis in a pre-B cell line. In Homo sapiens (Human), this protein is C-C chemokine receptor type 10 (CCR10).